Reading from the N-terminus, the 300-residue chain is MKIGVIMGGISTEREVSLNSGREVIKYLELLEHEIIPIIIDKKEDVMEKAKGIDFAFLALHGKFGEDGTVQSVLQTLDIPYSGCGPLTSAICMDKDMTKKILKYANINTADWVNVSSAENIDYEAIEKIGYPVFVKPNSGGSSVATNLVKDKEGIKEAVELALKYDKEVMIENYTKGEEITCCMLNGKMLPVLAIRPHAEFFDYTAKYADGGSDEVVIELEENLHKKVEEMALACWKELKCEVYVRVDMIVKDGIPYVLELNTLPGMTKNSLFPKSANAVGISFAELLNSIVKYSLEVER.

The ATP-grasp domain occupies 99–293; it reads KKILKYANIN…FAELLNSIVK (195 aa). 126-181 provides a ligand contact to ATP; the sequence is IEKIGYPVFVKPNSGGSSVATNLVKDKEGIKEAVELALKYDKEVMIENYTKGEEIT. The Mg(2+) site is built by Asp248, Glu260, and Asn262.

This sequence belongs to the D-alanine--D-alanine ligase family. It depends on Mg(2+) as a cofactor. Mn(2+) serves as cofactor.

The protein localises to the cytoplasm. It catalyses the reaction 2 D-alanine + ATP = D-alanyl-D-alanine + ADP + phosphate + H(+). It functions in the pathway cell wall biogenesis; peptidoglycan biosynthesis. Its function is as follows. Cell wall formation. This is D-alanine--D-alanine ligase from Clostridium botulinum (strain Okra / Type B1).